Reading from the N-terminus, the 388-residue chain is Putrescine N-methyltransferase 1 (388 aa).

Polar residues-rich tracts occupy residues 1–14 (MEVI…STIF), 23–39 (GYQN…QNGT), and 46–88 (HQNG…GNEL). Residues 1-88 (MEVISTNTNG…TISHDNGNEL (88 aa)) are disordered. In terms of domain architecture, PABS spans 99 to 336 (PGWFSEFSAL…GVIGYMLCST (238 aa)). Residues Gln-130, Glu-205, and 236–237 (DG) each bind S-adenosyl-L-methionine. Residue Asp-255 is the Proton acceptor of the active site. Tyr-324 serves as a coordination point for S-adenosyl-L-methionine.

It belongs to the class I-like SAM-binding methyltransferase superfamily. Spermidine/spermine synthase family. As to expression, mainly expressed in roots.

It carries out the reaction putrescine + S-adenosyl-L-methionine = N-methylputrescine + S-adenosyl-L-homocysteine + H(+). It participates in alkaloid biosynthesis; nicotine biosynthesis. Its function is as follows. Involved in the biosynthesis of pyridine alkaloid natural products, leading mainly to the production of anabasine, anatabine, nicotine and nornicotine, effective deterrents against herbivores with antiparasitic and pesticide properties (neurotoxins); nornicotine serves as the precursor in the synthesis of the carcinogen compound N'-nitrosonornicotine (NNN). Methyltransferase that mediates the conversion of putrescine to N-methylputrescine. The polypeptide is Putrescine N-methyltransferase 1 (Nicotiana attenuata (Coyote tobacco)).